We begin with the raw amino-acid sequence, 139 residues long: Small ribosomal subunit protein uS12m (139 aa).

Residues 1 to 29 (MSWSGPLRGLNTSLTCGPALVPRLWATCS) constitute a mitochondrion transit peptide. The segment at 36–56 (MHRLGGPPKRPPQKLGPTEGR) is disordered.

This sequence belongs to the universal ribosomal protein uS12 family. In terms of assembly, component of the mitochondrial ribosome small subunit (28S) which comprises a 12S rRNA and about 30 distinct proteins.

Its subcellular location is the mitochondrion. This chain is Small ribosomal subunit protein uS12m (MRPS12), found in Pongo abelii (Sumatran orangutan).